The sequence spans 708 residues: DNA ligase 2 (708 aa).

NAD(+)-binding positions include 71–75 (DADYD), 121–122 (SL), and E153. The active-site N6-AMP-lysine intermediate is the K155. R176, E213, K330, and K354 together coordinate NAD(+). Positions 448, 451, 466, and 471 each coordinate Zn(2+). Residues 627–708 (ADAGTLAGKE…LLRLAEAAPE (82 aa)) enclose the BRCT domain.

It belongs to the NAD-dependent DNA ligase family. LigA subfamily. Requires Mg(2+) as cofactor. The cofactor is Mn(2+).

The enzyme catalyses NAD(+) + (deoxyribonucleotide)n-3'-hydroxyl + 5'-phospho-(deoxyribonucleotide)m = (deoxyribonucleotide)n+m + AMP + beta-nicotinamide D-nucleotide.. Its function is as follows. DNA ligase that catalyzes the formation of phosphodiester linkages between 5'-phosphoryl and 3'-hydroxyl groups in double-stranded DNA using NAD as a coenzyme and as the energy source for the reaction. It is essential for DNA replication and repair of damaged DNA. The protein is DNA ligase 2 of Opitutus terrae (strain DSM 11246 / JCM 15787 / PB90-1).